The following is a 579-amino-acid chain: Adenine deaminase (579 aa).

It belongs to the metallo-dependent hydrolases superfamily. Adenine deaminase family. Mn(2+) serves as cofactor.

The enzyme catalyses adenine + H2O + H(+) = hypoxanthine + NH4(+). The protein is Adenine deaminase of Listeria welshimeri serovar 6b (strain ATCC 35897 / DSM 20650 / CCUG 15529 / CIP 8149 / NCTC 11857 / SLCC 5334 / V8).